Consider the following 516-residue polypeptide: L-amino-acid oxidase (516 aa).

Positions 1 to 18 (MNVFFMFSLLFLAALGSC) are cleaved as a signal peptide. An intrachain disulfide couples Cys28 to Cys191. Residues 61 to 62 (MS), 81 to 82 (EA), Arg89, and 105 to 108 (GPMR) contribute to the FAD site. Arg108 lines the substrate pocket. Asn190 carries N-linked (GlcNAc...) asparagine glycosylation. His241 lines the substrate pocket. Residue Val279 coordinates FAD. A disulfide bond links Cys349 and Cys430. Asn379 is a glycosylation site (N-linked (GlcNAc...) asparagine). Tyr390 lines the substrate pocket. FAD-binding positions include Glu475, 481 to 486 (HGWIDS), and 482 to 487 (GWIDSS). Substrate contacts are provided by residues 481–482 (HG) and 482–483 (GW).

Belongs to the flavin monoamine oxidase family. FIG1 subfamily. In terms of assembly, homodimer; non-covalently linked. The cofactor is FAD. In terms of processing, N-glycosylated. Expressed by the venom gland.

The protein localises to the secreted. The enzyme catalyses an L-alpha-amino acid + O2 + H2O = a 2-oxocarboxylate + H2O2 + NH4(+). In terms of biological role, catalyzes an oxidative deamination of predominantly hydrophobic and aromatic L-amino acids, thus producing hydrogen peroxide that may contribute to the diverse toxic effects of this enzyme. Exhibits diverse biological activities, such as hemorrhage, hemolysis, edema, apoptosis of vascular endothelial cells or tumor cell lines, antibacterial and antiparasitic activities, as well as regulation of platelet aggregation. Effects of snake L-amino oxidases on platelets are controversial, since they either induce aggregation or inhibit agonist-induced aggregation. These different effects are probably due to different experimental conditions. Displays dose-dependent inhibition on HIV-1 infection and replication. The polypeptide is L-amino-acid oxidase (Trimeresurus stejnegeri (Chinese green tree viper)).